A 21-amino-acid chain; its full sequence is FGLPMLSILPKALCILLKRKC.

Cys14 and Cys21 are oxidised to a cystine.

In terms of tissue distribution, expressed by the skin glands.

The protein localises to the secreted. Antibacterial activity against the Gram-negative bacterium E.coli and the Gram-positive bacterium S.aureus. The chain is Japonicin-2 from Rana japonica (Japanese reddish frog).